The primary structure comprises 288 residues: Zinc finger protein 42 (288 aa).

Composition is skewed to basic and acidic residues over residues 1 to 11 (MNEQKMNEQMK) and 26 to 38 (ALDR…DEAR). The interval 1 to 48 (MNEQKMNEQMKKTAKTSGQKGPGGRALDRLTLKQDEARPVQNTRVEAP) is disordered. C2H2-type zinc fingers lie at residues 170 to 194 (LECP…MLVH), 199 to 221 (HVCA…FLVH), 227 to 251 (YQCT…IRIH), and 258 to 281 (VCPF…ILTH). Residues Lys-213 and Lys-215 each participate in a glycyl lysine isopeptide (Lys-Gly) (interchain with G-Cter in ubiquitin) cross-link.

This sequence belongs to the krueppel C2H2-type zinc-finger protein family. In terms of processing, polyubiquitinated by RNF12, leading to proteasomal degradation. As to expression, restricted to testis, to germ cells in the early stages of spermatogenesis. Not expressed in spermatids, nor spermatozoa. Expressed in embryonic stem (ES) cells.

It localises to the nucleus. Functionally, involved in the reprogramming of X-chromosome inactivation during the acquisition of pluripotency. Required for efficient elongation of TSIX, a non-coding RNA antisense to XIST. Binds DXPas34 enhancer within the TSIX promoter. Involved in ES cell self-renewal. The protein is Zinc finger protein 42 (Zfp42) of Mus musculus (Mouse).